A 226-amino-acid polypeptide reads, in one-letter code: Cytochrome c oxidase subunit 2 (226 aa).

Residues 1–14 lie on the Mitochondrial intermembrane side of the membrane; it reads MAYPLQLGLQDATS. The helical transmembrane segment at 15–45 threads the bilayer; the sequence is PIMEELTSFHDHTLMIVFLISTLVLYIISLM. The Mitochondrial matrix segment spans residues 46–59; that stretch reads LTTKLTHTSTMDAQ. A helical membrane pass occupies residues 60 to 87; that stretch reads EIETIWTILPAIILIMIALPSLRVLYMM. Topologically, residues 88 to 226 are mitochondrial intermembrane; it reads DEINNPALTV…KYFEAWSASM (139 aa). Cu cation-binding residues include His-161, Cys-196, Glu-198, Cys-200, His-204, and Met-207. Glu-198 serves as a coordination point for Mg(2+). Tyr-218 is modified (phosphotyrosine).

The protein belongs to the cytochrome c oxidase subunit 2 family. Component of the cytochrome c oxidase (complex IV, CIV), a multisubunit enzyme composed of 14 subunits. The complex is composed of a catalytic core of 3 subunits MT-CO1, MT-CO2 and MT-CO3, encoded in the mitochondrial DNA, and 11 supernumerary subunits COX4I, COX5A, COX5B, COX6A, COX6B, COX6C, COX7A, COX7B, COX7C, COX8 and NDUFA4, which are encoded in the nuclear genome. The complex exists as a monomer or a dimer and forms supercomplexes (SCs) in the inner mitochondrial membrane with NADH-ubiquinone oxidoreductase (complex I, CI) and ubiquinol-cytochrome c oxidoreductase (cytochrome b-c1 complex, complex III, CIII), resulting in different assemblies (supercomplex SCI(1)III(2)IV(1) and megacomplex MCI(2)III(2)IV(2)). Found in a complex with TMEM177, COA6, COX18, COX20, SCO1 and SCO2. Interacts with TMEM177 in a COX20-dependent manner. Interacts with COX20. Interacts with COX16. The cofactor is Cu cation.

The protein resides in the mitochondrion inner membrane. It catalyses the reaction 4 Fe(II)-[cytochrome c] + O2 + 8 H(+)(in) = 4 Fe(III)-[cytochrome c] + 2 H2O + 4 H(+)(out). Component of the cytochrome c oxidase, the last enzyme in the mitochondrial electron transport chain which drives oxidative phosphorylation. The respiratory chain contains 3 multisubunit complexes succinate dehydrogenase (complex II, CII), ubiquinol-cytochrome c oxidoreductase (cytochrome b-c1 complex, complex III, CIII) and cytochrome c oxidase (complex IV, CIV), that cooperate to transfer electrons derived from NADH and succinate to molecular oxygen, creating an electrochemical gradient over the inner membrane that drives transmembrane transport and the ATP synthase. Cytochrome c oxidase is the component of the respiratory chain that catalyzes the reduction of oxygen to water. Electrons originating from reduced cytochrome c in the intermembrane space (IMS) are transferred via the dinuclear copper A center (CU(A)) of subunit 2 and heme A of subunit 1 to the active site in subunit 1, a binuclear center (BNC) formed by heme A3 and copper B (CU(B)). The BNC reduces molecular oxygen to 2 water molecules using 4 electrons from cytochrome c in the IMS and 4 protons from the mitochondrial matrix. This chain is Cytochrome c oxidase subunit 2 (MT-CO2), found in Perognathus flavus (Silky pocket mouse).